A 421-amino-acid chain; its full sequence is Serine hydroxymethyltransferase (421 aa).

Residues L123 and 127 to 129 (GHL) contribute to the (6S)-5,6,7,8-tetrahydrofolate site. Position 232 is an N6-(pyridoxal phosphate)lysine (K232).

Belongs to the SHMT family. Homodimer. Pyridoxal 5'-phosphate is required as a cofactor.

It is found in the cytoplasm. It carries out the reaction (6R)-5,10-methylene-5,6,7,8-tetrahydrofolate + glycine + H2O = (6S)-5,6,7,8-tetrahydrofolate + L-serine. It participates in one-carbon metabolism; tetrahydrofolate interconversion. Its pathway is amino-acid biosynthesis; glycine biosynthesis; glycine from L-serine: step 1/1. Its function is as follows. Catalyzes the reversible interconversion of serine and glycine with tetrahydrofolate (THF) serving as the one-carbon carrier. This reaction serves as the major source of one-carbon groups required for the biosynthesis of purines, thymidylate, methionine, and other important biomolecules. Also exhibits THF-independent aldolase activity toward beta-hydroxyamino acids, producing glycine and aldehydes, via a retro-aldol mechanism. This Ehrlichia ruminantium (strain Gardel) protein is Serine hydroxymethyltransferase.